Consider the following 700-residue polypeptide: Acyl-coenzyme A oxidase 2 (700 aa).

The protein belongs to the acyl-CoA oxidase family. Heteropentamer composed of five different subunits. Requires FAD as cofactor.

It localises to the peroxisome. It carries out the reaction a 2,3-saturated acyl-CoA + O2 = a (2E)-enoyl-CoA + H2O2. Its pathway is lipid metabolism; peroxisomal fatty acid beta-oxidation. Oxidizes strain chain acyl-CoAs with a chain length of 10 to 14 carbons. Also active toward the 2S isomers of acyl-CoA-esters containing a 2-methyl group. The sequence is that of Acyl-coenzyme A oxidase 2 (POX2) from Yarrowia lipolytica (strain CLIB 122 / E 150) (Yeast).